The primary structure comprises 273 residues: Probable ribosomal RNA small subunit methyltransferase A (273 aa).

S-adenosyl-L-methionine-binding residues include Asn-26, Leu-28, Gly-53, Glu-74, Asp-98, and Asn-113.

Belongs to the class I-like SAM-binding methyltransferase superfamily. rRNA adenine N(6)-methyltransferase family. RsmA subfamily.

It is found in the cytoplasm. Its function is as follows. Specifically dimethylates two adjacent adenosines in the loop of a conserved hairpin near the 3'-end of 16S rRNA in the 30S particle. May play a critical role in biogenesis of 30S subunits. The polypeptide is Probable ribosomal RNA small subunit methyltransferase A (Methanothermobacter thermautotrophicus (strain ATCC 29096 / DSM 1053 / JCM 10044 / NBRC 100330 / Delta H) (Methanobacterium thermoautotrophicum)).